We begin with the raw amino-acid sequence, 104 residues long: Large ribosomal subunit protein uL24 (104 aa).

Residues 85-96 (IKRELGAKEKAR) are compositionally biased toward basic and acidic residues. The tract at residues 85–104 (IKRELGAKEKARADRRKTAK) is disordered.

It belongs to the universal ribosomal protein uL24 family. Part of the 50S ribosomal subunit.

In terms of biological role, one of two assembly initiator proteins, it binds directly to the 5'-end of the 23S rRNA, where it nucleates assembly of the 50S subunit. One of the proteins that surrounds the polypeptide exit tunnel on the outside of the subunit. In Anaeromyxobacter sp. (strain Fw109-5), this protein is Large ribosomal subunit protein uL24.